A 143-amino-acid polypeptide reads, in one-letter code: Cytochrome c-type biogenesis protein CcmE (143 aa).

Topologically, residues 1–8 (MTPVRRRK) are cytoplasmic. A helical; Signal-anchor for type II membrane protein transmembrane segment spans residues 9–29 (LFILLFALSVLSAAAALVLYA). Residues 30–143 (LRQNISLFYT…KSALADKVKQ (114 aa)) are Periplasmic-facing. H124 and Y128 together coordinate heme.

Belongs to the CcmE/CycJ family.

Its subcellular location is the cell inner membrane. Its function is as follows. Heme chaperone required for the biogenesis of c-type cytochromes. Transiently binds heme delivered by CcmC and transfers the heme to apo-cytochromes in a process facilitated by CcmF and CcmH. This Legionella pneumophila protein is Cytochrome c-type biogenesis protein CcmE.